The following is a 111-amino-acid chain: Complement inhibitor CirpT1 (111 aa).

A signal peptide spans Met-1–Phe-19. Intrachain disulfides connect Cys-40/Cys-64, Cys-59/Cys-98, Cys-76/Cys-99, and Cys-85/Cys-104.

This sequence belongs to the CirpT family. As to expression, expressed in salivary glands.

The protein resides in the secreted. In terms of biological role, complement inhibitor. Prevents complement-mediated activation of C5 by sterically preventing direct binding of C5 to its convertase (binding with domains MG4 and MG5). Binds C5 at a different binding site than the other tick complement inhibitors OmCI and RaCI3, and the drug eculizumab. Inhibits the complement in human, rat and guinea pig, and also shows a reduced inhibition in rabbit and pig. The chain is Complement inhibitor CirpT1 from Rhipicephalus pulchellus (Yellow backed tick).